The sequence spans 415 residues: Imidazolonepropionase (415 aa).

His76 and His78 together coordinate Fe(3+). 2 residues coordinate Zn(2+): His76 and His78. Positions 85, 148, and 181 each coordinate 4-imidazolone-5-propanoate. Tyr148 provides a ligand contact to N-formimidoyl-L-glutamate. Fe(3+) is bound at residue His246. His246 contacts Zn(2+). Glu249 is a binding site for 4-imidazolone-5-propanoate. Fe(3+) is bound at residue Asp320. A Zn(2+)-binding site is contributed by Asp320. Residues Asn322 and Gly324 each contribute to the N-formimidoyl-L-glutamate site. A 4-imidazolone-5-propanoate-binding site is contributed by Thr325.

Belongs to the metallo-dependent hydrolases superfamily. HutI family. Zn(2+) is required as a cofactor. Requires Fe(3+) as cofactor.

The protein resides in the cytoplasm. It catalyses the reaction 4-imidazolone-5-propanoate + H2O = N-formimidoyl-L-glutamate. It participates in amino-acid degradation; L-histidine degradation into L-glutamate; N-formimidoyl-L-glutamate from L-histidine: step 3/3. Functionally, catalyzes the hydrolytic cleavage of the carbon-nitrogen bond in imidazolone-5-propanoate to yield N-formimidoyl-L-glutamate. It is the third step in the universal histidine degradation pathway. This Caldanaerobacter subterraneus subsp. tengcongensis (strain DSM 15242 / JCM 11007 / NBRC 100824 / MB4) (Thermoanaerobacter tengcongensis) protein is Imidazolonepropionase.